The primary structure comprises 223 residues: Chorismate dehydratase (223 aa).

The protein belongs to the MqnA/MqnD family. MqnA subfamily.

The catalysed reaction is chorismate = 3-[(1-carboxyvinyl)-oxy]benzoate + H2O. The protein operates within quinol/quinone metabolism; menaquinone biosynthesis. In terms of biological role, catalyzes the dehydration of chorismate into 3-[(1-carboxyvinyl)oxy]benzoate, a step in the biosynthesis of menaquinone (MK, vitamin K2). This chain is Chorismate dehydratase, found in Campylobacter jejuni subsp. jejuni serotype O:23/36 (strain 81-176).